A 224-amino-acid chain; its full sequence is Ribose-5-phosphate isomerase A (224 aa).

Substrate is bound by residues 26 to 29 (TGST), 82 to 85 (DGAD), and 95 to 98 (KGGG). Catalysis depends on glutamate 104, which acts as the Proton acceptor. Lysine 122 is a binding site for substrate.

Belongs to the ribose 5-phosphate isomerase family. As to quaternary structure, homodimer.

It catalyses the reaction aldehydo-D-ribose 5-phosphate = D-ribulose 5-phosphate. It functions in the pathway carbohydrate degradation; pentose phosphate pathway; D-ribose 5-phosphate from D-ribulose 5-phosphate (non-oxidative stage): step 1/1. Its function is as follows. Catalyzes the reversible conversion of ribose-5-phosphate to ribulose 5-phosphate. In Lactococcus lactis subsp. cremoris (strain SK11), this protein is Ribose-5-phosphate isomerase A.